The primary structure comprises 275 residues: Large ribosomal subunit protein uL2 (275 aa).

Disordered stretches follow at residues 36–55 (GLTGSGGRNNTGRITARRMG) and 224–263 (VVMNPIDHPHGGGEGRTSGGRHPVTPWGKPTKGKKTRQNK).

The protein belongs to the universal ribosomal protein uL2 family. In terms of assembly, part of the 50S ribosomal subunit. Forms a bridge to the 30S subunit in the 70S ribosome.

In terms of biological role, one of the primary rRNA binding proteins. Required for association of the 30S and 50S subunits to form the 70S ribosome, for tRNA binding and peptide bond formation. It has been suggested to have peptidyltransferase activity; this is somewhat controversial. Makes several contacts with the 16S rRNA in the 70S ribosome. The chain is Large ribosomal subunit protein uL2 from Rhodospirillum centenum (strain ATCC 51521 / SW).